Reading from the N-terminus, the 337-residue chain is Ketol-acid reductoisomerase (NADP(+)) (337 aa).

Residues 3–183 (IELLYDADAD…GGARAGVIPT (181 aa)) form the KARI N-terminal Rossmann domain. Residues 26-29 (YGSQ), R49, S52, S54, and 84-87 (DTSQ) each bind NADP(+). H109 is a catalytic residue. Residue G135 participates in NADP(+) binding. The 146-residue stretch at 184–329 (TFREETETDL…SKLRDLMSWV (146 aa)) folds into the KARI C-terminal knotted domain. Mg(2+) is bound by residues D192, E196, E228, and E232. Residue S253 coordinates substrate.

It belongs to the ketol-acid reductoisomerase family. The cofactor is Mg(2+).

It carries out the reaction (2R)-2,3-dihydroxy-3-methylbutanoate + NADP(+) = (2S)-2-acetolactate + NADPH + H(+). It catalyses the reaction (2R,3R)-2,3-dihydroxy-3-methylpentanoate + NADP(+) = (S)-2-ethyl-2-hydroxy-3-oxobutanoate + NADPH + H(+). The protein operates within amino-acid biosynthesis; L-isoleucine biosynthesis; L-isoleucine from 2-oxobutanoate: step 2/4. It functions in the pathway amino-acid biosynthesis; L-valine biosynthesis; L-valine from pyruvate: step 2/4. Functionally, involved in the biosynthesis of branched-chain amino acids (BCAA). Catalyzes an alkyl-migration followed by a ketol-acid reduction of (S)-2-acetolactate (S2AL) to yield (R)-2,3-dihydroxy-isovalerate. In the isomerase reaction, S2AL is rearranged via a Mg-dependent methyl migration to produce 3-hydroxy-3-methyl-2-ketobutyrate (HMKB). In the reductase reaction, this 2-ketoacid undergoes a metal-dependent reduction by NADPH to yield (R)-2,3-dihydroxy-isovalerate. This chain is Ketol-acid reductoisomerase (NADP(+)), found in Corynebacterium diphtheriae (strain ATCC 700971 / NCTC 13129 / Biotype gravis).